The chain runs to 324 residues: NADH-quinone oxidoreductase subunit H (324 aa).

8 helical membrane passes run 11 to 31, 81 to 101, 114 to 134, 154 to 174, 186 to 206, 237 to 257, 264 to 284, and 304 to 324; these read ILIT…CGAF, VIFT…FAIV, IGIL…LFAG, VSYE…AGSF, LWNV…GVAV, FFVG…TLFF, ILPP…MFIL, and VCLP…LYNA.

The protein belongs to the complex I subunit 1 family. In terms of assembly, NDH-1 is composed of 13 different subunits. Subunits NuoA, H, J, K, L, M, N constitute the membrane sector of the complex.

Its subcellular location is the cell inner membrane. It carries out the reaction a quinone + NADH + 5 H(+)(in) = a quinol + NAD(+) + 4 H(+)(out). NDH-1 shuttles electrons from NADH, via FMN and iron-sulfur (Fe-S) centers, to quinones in the respiratory chain. The immediate electron acceptor for the enzyme in this species is believed to be ubiquinone. Couples the redox reaction to proton translocation (for every two electrons transferred, four hydrogen ions are translocated across the cytoplasmic membrane), and thus conserves the redox energy in a proton gradient. This subunit may bind ubiquinone. This chain is NADH-quinone oxidoreductase subunit H, found in Pectobacterium carotovorum subsp. carotovorum (strain PC1).